The chain runs to 406 residues: DAZ-associated protein 1 (406 aa).

An N-acetylmethionine modification is found at methionine 1. 2 consecutive RRM domains span residues 10-97 and 113-190; these read GKLF…RTRP and NKIF…RAEP. The tract at residues 74–117 is disordered; sequence TLDGRNIDPKPCTPRGMQPERTRPKEGWQKGPRSDSSKSNKIFV. Basic and acidic residues predominate over residues 91 to 111; the sequence is QPERTRPKEGWQKGPRSDSSK. The residue at position 150 (lysine 150) is an N6-acetyllysine. The segment at 186-406 is disordered; it reads KRAEPRDSKN…NVQGFHPYRR (221 aa). A compositionally biased stretch (polar residues) spans 195-207; that stretch reads NQAPGQPGASQWG. Residues 247-262 are compositionally biased toward pro residues; the sequence is GPPPAGRGAPPPPPPF. Residue arginine 253 is modified to Omega-N-methylarginine. Residues 280–294 are compositionally biased toward low complexity; sequence FPQGYGAPPQFSFGY. Residues 295–315 are compositionally biased toward pro residues; that stretch reads GPPPPPPDQFAPPGVPPPPAT. The segment covering 363–378 has biased composition (low complexity); sequence SDPSQQPPSYGGPSVP. The segment covering 379–392 has biased composition (gly residues); sequence GSGGPPAGGSGFGR.

As to quaternary structure, interacts with DAZ and DAZL. Post-translationally, acetylation at Lys-150 is predominantly observed in the nuclear fraction, and may regulate nucleocytoplasmic transport. As to expression, mainly expressed in testis. Expressed at much lower level in liver, heart and brain. Also expressed in ovary. Expressed throughout testes development, in both the prenatal and postnatal periods.

The protein localises to the cytoplasm. It is found in the nucleus. In terms of biological role, RNA-binding protein, which may be required during spermatogenesis. The sequence is that of DAZ-associated protein 1 (Dazap1) from Mus musculus (Mouse).